Reading from the N-terminus, the 181-residue chain is Transcriptional repressor NrdR (181 aa).

Residues 3–34 (CLFCQHTYTRVIDSRVSEDGATIRRRRECEAC) fold into a zinc finger. Residues 49-139 (PVIIKKDGGR…VYRSFQDVAD (91 aa)) form the ATP-cone domain.

This sequence belongs to the NrdR family. Zn(2+) serves as cofactor.

Negatively regulates transcription of bacterial ribonucleotide reductase nrd genes and operons by binding to NrdR-boxes. This is Transcriptional repressor NrdR from Xylella fastidiosa (strain 9a5c).